A 509-amino-acid chain; its full sequence is Tyrosine-protein kinase Lck (509 aa).

A lipid anchor (N-myristoyl glycine) is attached at G2. The tract at residues G2–Y72 is interactions with CD4 and CD8. S-palmitoyl cysteine attachment occurs at residues C3 and C5. The region spanning L61 to S121 is the SH3 domain. K99 participates in a covalent cross-link: Glycyl lysine isopeptide (Lys-Gly) (interchain with G-Cter in ubiquitin). S102 bears the Phosphoserine mark. The SH2 domain maps to W127–C224. The interval R154–R242 is interaction with PTPRH. Residue T159 is modified to Phosphothreonine. S162 carries the post-translational modification Phosphoserine. Y192 bears the Phosphotyrosine mark. S194 carries the post-translational modification Phosphoserine. The region spanning L245–F498 is the Protein kinase domain. ATP-binding positions include L251–V259 and K273. K276 participates in a covalent cross-link: Glycyl lysine isopeptide (Lys-Gly) (interchain with G-Cter in ubiquitin). D364 (proton acceptor) is an active-site residue. Y394 bears the Phosphotyrosine; by autocatalysis mark. Residue Y505 is modified to Phosphotyrosine; by CSK.

Belongs to the protein kinase superfamily. Tyr protein kinase family. SRC subfamily. As to quaternary structure, binds to the cytoplasmic domain of cell surface receptors, such as AXL, CD2, CD4, CD5, CD8, CD44, CD45 and CD122. Also binds to effector molecules, such as PI4K, VAV1, RASA1, FYB1 and to other protein kinases including CDK1, RAF1, ZAP70 and SYK. Binds to phosphatidylinositol 3'-kinase (PI3K) from T-lymphocytes through its SH3 domain and to the tyrosine phosphorylated form of KHDRBS1/p70 through its SH2 domain. This interaction inhibits its tyrosine-kinase activity. Interacts with SQSTM1. Interacts with phosphorylated LIME1. Interacts with CBLB and PTPRH. Interacts with RUNX3. Forms a signaling complex with EPHA1, PTK2B and PI3-KINASE; upon activation by EFNA1 which may regulate T-lymphocyte migration. Associates with ZAP70 and RHOH; these interactions allow LCK-mediated RHOH and CD3 subunit phosphorylation in the presence of functional ZAP70. Interacts with UNC119; this interaction plays a crucial role in activation of LCK. Interacts with CEACAM1 (via cytoplasmic domain); mediates CEACAM1 phosphorylation resulting in PTPN6 recruitment that dephosphorylates TCR stimulation-induced CD247 and ZAP70. Interacts with CD160. Interacts with CD48. In terms of assembly, (Microbial infection) Interacts with herpes simplex virus 1 UL46; this interaction activates LCK. (Microbial infection) Interacts with HIV-1 Nef through its SH3 domain. Autophosphorylated on Tyr-394, increasing enzymatic activity, this site is dephosphorylated by PTN22. Phosphorylated on Tyr-505 by CSK, decreasing activity. Dephosphorylated by PTPRC/CD45. Dephosphorylation at Tyr-394 by PTPN2 negatively regulates T-cell receptor signaling. Dephosphorylation at Tyr-394 by DUSP22 negatively regulates T-cell receptor signaling. Post-translationally, myristoylation is required prior to palmitoylation. In terms of processing, palmitoylation regulates association with the plasma membrane and could be mediated by ZDHHC2. 'Lys-63'-linked ubiquitinated at Lys-99 and Lys-276 by UBR2; this modification is required for autophosphorylation at Tyr-394. As to expression, expressed specifically in lymphoid cells.

It localises to the cell membrane. Its subcellular location is the cytoplasm. The protein localises to the cytosol. It catalyses the reaction L-tyrosyl-[protein] + ATP = O-phospho-L-tyrosyl-[protein] + ADP + H(+). Its activity is regulated as follows. The relative activities of the inhibitory tyrosine-protein kinase CSK and the activating tyrosine-protein phosphatase PTPRC/CD45 determine the level of LCK activity. These interactions allow rapid and efficient activation of LCK in response to TCR stimulation. Non-receptor tyrosine-protein kinase that plays an essential role in the selection and maturation of developing T-cells in the thymus and in the function of mature T-cells. Plays a key role in T-cell antigen receptor (TCR)-linked signal transduction pathways. Constitutively associated with the cytoplasmic portions of the CD4 and CD8 surface receptors. Association of the TCR with a peptide antigen-bound MHC complex facilitates the interaction of CD4 and CD8 with MHC class II and class I molecules, respectively, thereby recruiting the associated LCK protein to the vicinity of the TCR/CD3 complex. LCK then phosphorylates tyrosine residues within the immunoreceptor tyrosine-based activation motifs (ITAM) of the cytoplasmic tails of the TCR-gamma chains and CD3 subunits, initiating the TCR/CD3 signaling pathway. Once stimulated, the TCR recruits the tyrosine kinase ZAP70, that becomes phosphorylated and activated by LCK. Following this, a large number of signaling molecules are recruited, ultimately leading to lymphokine production. LCK also contributes to signaling by other receptor molecules. Associates directly with the cytoplasmic tail of CD2, which leads to hyperphosphorylation and activation of LCK. Also plays a role in the IL2 receptor-linked signaling pathway that controls the T-cell proliferative response. Binding of IL2 to its receptor results in increased activity of LCK. Is expressed at all stages of thymocyte development and is required for the regulation of maturation events that are governed by both pre-TCR and mature alpha beta TCR. Phosphorylates other substrates including RUNX3, PTK2B/PYK2, the microtubule-associated protein MAPT, RHOH or TYROBP. Interacts with FYB2. The protein is Tyrosine-protein kinase Lck (LCK) of Homo sapiens (Human).